We begin with the raw amino-acid sequence, 155 residues long: Fibroblast growth factor 1 (155 aa).

Position 2 is an N-acetylalanine (Ala-2). Positions 2-15 (AEGEITTFAALTER) are excised as a propeptide. Asn-33 serves as a coordination point for heparin. Positions 127-143 (KKNGSCKRGPRTHYGQK) are heparin-binding.

It belongs to the heparin-binding growth factors family. Monomer. Homodimer. Interacts with FGFR1, FGFR2, FGFR3 and FGFR4. Affinity between fibroblast growth factors (FGFs) and their receptors is increased by heparan sulfate glycosaminoglycans that function as coreceptors. Found in a complex with FGFBP1, FGF1 and FGF2. Interacts with FGFBP1. Part of a Cu(2+)-dependent multiprotein aggregate containing FGF1, S100A13 and SYT1. Interacts with SYT1. Interacts with S100A13. Interacts with LRRC59. Interacts with CSNKA, CSNKB and FIBP. While binding with LRRC59, CSNKA and FIBP seem mutually exclusive, CSNKB and FIBP may cooperatively interact with FGF1. Forms a ternary complex with FGFR1 and ITGAV:ITGB3 and induces the recruitment of PTPN11 to the complex. In terms of processing, in the nucleus, phosphorylated by PKC/PRKCD.

The protein resides in the secreted. It localises to the cytoplasm. The protein localises to the cell cortex. It is found in the cytosol. Its subcellular location is the nucleus. Plays an important role in the regulation of cell survival, cell division, angiogenesis, cell differentiation and cell migration. Functions as a potent mitogen in vitro. Acts as a ligand for FGFR1 and integrins. Binds to FGFR1 in the presence of heparin leading to FGFR1 dimerization and activation via sequential autophosphorylation on tyrosine residues which act as docking sites for interacting proteins, leading to the activation of several signaling cascades. Binds to integrin ITGAV:ITGB3. Its binding to integrin, subsequent ternary complex formation with integrin and FGFR1, and the recruitment of PTPN11 to the complex are essential for FGF1 signaling. Induces the phosphorylation and activation of FGFR1, FRS2, MAPK3/ERK1, MAPK1/ERK2 and AKT1. Can induce angiogenesis. The chain is Fibroblast growth factor 1 (Fgf1) from Mus musculus (Mouse).